The sequence spans 90 residues: Acylphosphatase (90 aa).

Positions 3-90 (HYHAIITGRV…AHYQDFRIKG (88 aa)) constitute an Acylphosphatase-like domain. Catalysis depends on residues R18 and N36.

This sequence belongs to the acylphosphatase family.

It catalyses the reaction an acyl phosphate + H2O = a carboxylate + phosphate + H(+). The protein is Acylphosphatase (acyP) of Bacillus pumilus (strain SAFR-032).